A 217-amino-acid chain; its full sequence is Somatotropin (217 aa).

An N-terminal signal peptide occupies residues M1–A27. H46 is a binding site for Zn(2+). C79 and C190 are joined by a disulfide. S132 is subject to Phosphoserine. E199 serves as a coordination point for Zn(2+). C207 and C215 form a disulfide bridge.

This sequence belongs to the somatotropin/prolactin family.

It localises to the secreted. Plays an important role in growth control. Its major role in stimulating body growth is to stimulate the liver and other tissues to secrete IGF1. It stimulates both the differentiation and proliferation of myoblasts. It also stimulates amino acid uptake and protein synthesis in muscle and other tissues. This is Somatotropin (GH1) from Cervus elaphus (Red deer).